The chain runs to 283 residues: Pantothenate synthetase (283 aa).

Position 30 to 37 (30 to 37 (MGNLHSGH)) interacts with ATP. Residue His37 is the Proton donor of the active site. Gln61 provides a ligand contact to (R)-pantoate. Gln61 provides a ligand contact to beta-alanine. 149 to 152 (GEKD) contributes to the ATP binding site. Gln155 lines the (R)-pantoate pocket. ATP is bound by residues Val178 and 186 to 189 (LSSR).

Belongs to the pantothenate synthetase family. In terms of assembly, homodimer.

The protein resides in the cytoplasm. The catalysed reaction is (R)-pantoate + beta-alanine + ATP = (R)-pantothenate + AMP + diphosphate + H(+). It participates in cofactor biosynthesis; (R)-pantothenate biosynthesis; (R)-pantothenate from (R)-pantoate and beta-alanine: step 1/1. Catalyzes the condensation of pantoate with beta-alanine in an ATP-dependent reaction via a pantoyl-adenylate intermediate. The protein is Pantothenate synthetase of Pseudomonas savastanoi pv. phaseolicola (strain 1448A / Race 6) (Pseudomonas syringae pv. phaseolicola (strain 1448A / Race 6)).